Consider the following 234-residue polypeptide: Ras-related protein Rab-20 (234 aa).

GTP-binding residues include G17, K18, T19, D32, and T36. Residue T19 coordinates Mg(2+). 2 consecutive short sequence motifs (switch) follow at residues 28–41 and 55–72; these read RRFP…GGAF and DTAG…YCRG. T36 and D55 together coordinate Mg(2+). Positions 58, 113, 114, and 116 each coordinate GTP. Residues 125 to 144 form a disordered region; that stretch reads GQEKEECSPNMDAGDRVSPR. A compositionally biased stretch (basic and acidic residues) spans 126–142; the sequence is QEKEECSPNMDAGDRVS. GTP is bound by residues A184 and K185. Residues 212–234 are disordered; it reads RPSHTVDISSHKPPKRTRSGCCA. Residues 223-234 show a composition bias toward basic residues; it reads KPPKRTRSGCCA. S-geranylgeranyl cysteine attachment occurs at residues C232 and C233.

The protein belongs to the small GTPase superfamily. Rab family. It depends on Mg(2+) as a cofactor. Low or absent expression in normal pancreas and stronger expression in 15 of 18 exocrine pancreatic adenocarcinomas (at protein level).

It localises to the golgi apparatus. It is found in the cytoplasmic vesicle. The protein localises to the phagosome. Its subcellular location is the phagosome membrane. It catalyses the reaction GTP + H2O = GDP + phosphate + H(+). Regulated by guanine nucleotide exchange factors (GEFs) which promote the exchange of bound GDP for free GTP. Regulated by GTPase activating proteins (GAPs) which increase the GTP hydrolysis activity. Inhibited by GDP dissociation inhibitors (GDIs). Functionally, the small GTPases Rab are key regulators of intracellular membrane trafficking, from the formation of transport vesicles to their fusion with membranes. Rabs cycle between an inactive GDP-bound form and an active GTP-bound form that is able to recruit to membranes different sets of downstream effectors directly responsible for vesicle formation, movement, tethering and fusion. RAB20 plays a role in apical endocytosis/recycling. Plays a role in the maturation and acidification of phagosomes that engulf pathogens, such as S.aureus and M.tuberculosis. Plays a role in the fusion of phagosomes with lysosomes. The protein is Ras-related protein Rab-20 of Homo sapiens (Human).